The chain runs to 430 residues: Adenylosuccinate synthetase (430 aa).

Residues 12-18 (GDEGKGK) and 40-42 (GHT) each bind GTP. The active-site Proton acceptor is aspartate 13. The Mg(2+) site is built by aspartate 13 and glycine 40. IMP is bound by residues 13 to 16 (DEGK), 38 to 41 (NAGH), threonine 128, arginine 142, glutamine 223, threonine 238, and arginine 302. The Proton donor role is filled by histidine 41. 298-304 (TTTGRPR) lines the substrate pocket. GTP contacts are provided by residues arginine 304, 330 to 332 (SID), and 412 to 414 (SVG).

The protein belongs to the adenylosuccinate synthetase family. In terms of assembly, homodimer. Mg(2+) serves as cofactor.

It is found in the cytoplasm. It catalyses the reaction IMP + L-aspartate + GTP = N(6)-(1,2-dicarboxyethyl)-AMP + GDP + phosphate + 2 H(+). Its pathway is purine metabolism; AMP biosynthesis via de novo pathway; AMP from IMP: step 1/2. Plays an important role in the de novo pathway of purine nucleotide biosynthesis. Catalyzes the first committed step in the biosynthesis of AMP from IMP. The sequence is that of Adenylosuccinate synthetase from Streptococcus pyogenes serotype M6 (strain ATCC BAA-946 / MGAS10394).